A 446-amino-acid chain; its full sequence is tRNA(Ile2) 2-agmatinylcytidine synthetase TiaS (446 aa).

Belongs to the TiaS family.

The protein localises to the cytoplasm. The enzyme catalyses cytidine(34) in tRNA(Ile2) + agmatine + ATP + H2O = 2-agmatinylcytidine(34) in tRNA(Ile2) + AMP + 2 phosphate + 2 H(+). Functionally, ATP-dependent agmatine transferase that catalyzes the formation of 2-agmatinylcytidine (agm2C) at the wobble position (C34) of tRNA(Ile2), converting the codon specificity from AUG to AUA. This is tRNA(Ile2) 2-agmatinylcytidine synthetase TiaS from Cenarchaeum symbiosum (strain A).